The sequence spans 177 residues: ATP synthase subunit delta (177 aa).

This sequence belongs to the ATPase delta chain family. As to quaternary structure, F-type ATPases have 2 components, F(1) - the catalytic core - and F(0) - the membrane proton channel. F(1) has five subunits: alpha(3), beta(3), gamma(1), delta(1), epsilon(1). F(0) has three main subunits: a(1), b(2) and c(10-14). The alpha and beta chains form an alternating ring which encloses part of the gamma chain. F(1) is attached to F(0) by a central stalk formed by the gamma and epsilon chains, while a peripheral stalk is formed by the delta and b chains.

The protein resides in the cell inner membrane. Functionally, f(1)F(0) ATP synthase produces ATP from ADP in the presence of a proton or sodium gradient. F-type ATPases consist of two structural domains, F(1) containing the extramembraneous catalytic core and F(0) containing the membrane proton channel, linked together by a central stalk and a peripheral stalk. During catalysis, ATP synthesis in the catalytic domain of F(1) is coupled via a rotary mechanism of the central stalk subunits to proton translocation. This protein is part of the stalk that links CF(0) to CF(1). It either transmits conformational changes from CF(0) to CF(1) or is implicated in proton conduction. The protein is ATP synthase subunit delta of Pasteurella multocida (strain Pm70).